The primary structure comprises 223 residues: Uracil-DNA glycosylase (223 aa).

Asp-61 functions as the Proton acceptor in the catalytic mechanism.

Belongs to the uracil-DNA glycosylase (UDG) superfamily. UNG family.

The protein resides in the cytoplasm. The catalysed reaction is Hydrolyzes single-stranded DNA or mismatched double-stranded DNA and polynucleotides, releasing free uracil.. Excises uracil residues from the DNA which can arise as a result of misincorporation of dUMP residues by DNA polymerase or due to deamination of cytosine. This is Uracil-DNA glycosylase from Tolumonas auensis (strain DSM 9187 / NBRC 110442 / TA 4).